We begin with the raw amino-acid sequence, 197 residues long: NADH-quinone oxidoreductase subunit C (197 aa).

This sequence belongs to the complex I 30 kDa subunit family. In terms of assembly, NDH-1 is composed of 14 different subunits. Subunits NuoB, C, D, E, F, and G constitute the peripheral sector of the complex.

The protein resides in the cell inner membrane. The catalysed reaction is a quinone + NADH + 5 H(+)(in) = a quinol + NAD(+) + 4 H(+)(out). NDH-1 shuttles electrons from NADH, via FMN and iron-sulfur (Fe-S) centers, to quinones in the respiratory chain. The immediate electron acceptor for the enzyme in this species is believed to be ubiquinone. Couples the redox reaction to proton translocation (for every two electrons transferred, four hydrogen ions are translocated across the cytoplasmic membrane), and thus conserves the redox energy in a proton gradient. This chain is NADH-quinone oxidoreductase subunit C, found in Rickettsia prowazekii (strain Madrid E).